The primary structure comprises 150 residues: Large ribosomal subunit protein bL9 (150 aa).

It belongs to the bacterial ribosomal protein bL9 family.

In terms of biological role, binds to the 23S rRNA. The sequence is that of Large ribosomal subunit protein bL9 from Moorella thermoacetica (strain ATCC 39073 / JCM 9320).